The following is a 152-amino-acid chain: Cytosolic calcium-binding protein 1 (152 aa).

Repeat copies occupy residues 57–62 (VEETEK), 67–71 (TEEAQ), 78–82 (VEIKK), 104–108 (VEAKK), 112–116 (VEEKK), 124–129 (VEEEKK), and 131–136 (EAEEEK). Residues 57–136 (VEETEKPIEE…EKKPEAEEEK (80 aa)) are 7 X 5 AA approximate repeats of V-E-E-K-K. The interval 60 to 152 (TEKPIEETEE…VTAPVEKADE (93 aa)) is disordered. Residues 96–138 (DESKTEEVVEAKKEEEVEEKKTEEAPVVVEEEKKPEAEEEKPA) show a composition bias toward basic and acidic residues.

As to expression, predominantly expressed in petioles (at protein level). Mainly observed in shoots, flowers, siliques and roots, and, to a lower extent, in stems and leaves.

It is found in the cytoplasm. The protein resides in the cytosol. Binds calcium Ca(2+) and may act as a signal mediator to buffer Ca(2+). The sequence is that of Cytosolic calcium-binding protein 1 from Arabidopsis thaliana (Mouse-ear cress).